The sequence spans 341 residues: MFRSALVRSSASAKQSLLRRSFSSGSVPERKVAILGAAGGIGQPLALLMKLNPLVSSLSLYDIANTPGVAADVGHINTRSQVVGYMGDDNLAKALEGADLVIIPAGVPRKPGMTRDDLFNINAGIVKNLWSAIAKYCPHALVNMISNPVNSTVPIAAEIFKKAGMYDEKKLFGVTTLDVVRVKTSYAGKANVPVAEVNVPAIVGHAGVTILPLFSQATPQAILSGDALTVTTKRTQDGGTEVEEAKAGKGSATLSMAYAGALFADACLKGLNGVPDVVECSYVQSTITELPFFASKVRLGKNGVEEVLDLGPLSDFEKEGLEALRPGIKSTIEKGVKFANQ.

A mitochondrion-targeting transit peptide spans 1–22 (MFRSALVRSSASAKQSLLRRSF). NAD(+) contacts are provided by residues 36 to 42 (GAAGGIG) and Asp62. Positions 109 and 115 each coordinate substrate. NAD(+)-binding positions include Asn122 and 145–147 (ISN). The substrate site is built by Asn147 and Arg181. Met256 contributes to the NAD(+) binding site.

Belongs to the LDH/MDH superfamily. MDH type 1 family. Homodimer.

The protein localises to the mitochondrion matrix. It carries out the reaction (S)-malate + NAD(+) = oxaloacetate + NADH + H(+). The protein is Malate dehydrogenase, mitochondrial (MDH) of Brassica napus (Rape).